We begin with the raw amino-acid sequence, 229 residues long: Uracil-DNA glycosylase (229 aa).

Catalysis depends on aspartate 72, which acts as the Proton acceptor.

The protein belongs to the uracil-DNA glycosylase (UDG) superfamily. UNG family.

It localises to the cytoplasm. The catalysed reaction is Hydrolyzes single-stranded DNA or mismatched double-stranded DNA and polynucleotides, releasing free uracil.. In terms of biological role, excises uracil residues from the DNA which can arise as a result of misincorporation of dUMP residues by DNA polymerase or due to deamination of cytosine. In Dichelobacter nodosus (strain VCS1703A), this protein is Uracil-DNA glycosylase.